The sequence spans 726 residues: Cyclin-T1 (726 aa).

Ser117 carries the phosphoserine modification. A Nuclear localization signal, and interaction with Tat-TAR RNA motif is present at residues 253 to 270; it reads KRIWNWRACEAAKKTKAD. Ser340 carries the post-translational modification Phosphoserine. Residue Lys342 forms a Glycyl lysine isopeptide (Lys-Gly) (interchain with G-Cter in SUMO2) linkage. A disordered region spans residues 360-385; sequence VDHSLPQDGSNAFISQKQNSKSVPSA. The span at 366-382 shows a compositional bias: polar residues; it reads QDGSNAFISQKQNSKSV. Residues 384 to 425 adopt a coiled-coil conformation; that stretch reads SAKVSLKEYRAKHAEELAAQKRQLENMEANVKSQYAYAAQNL. Phosphoserine is present on Ser388. At Lys390 the chain carries N6-acetyllysine. A Glycyl lysine isopeptide (Lys-Gly) (interchain with G-Cter in SUMO2) cross-link involves residue Lys415. Residues Ser416, Ser474, and Ser475 each carry the ADP-ribosylserine modification. Positions 480–550 are histidine-rich domain (HRD); the sequence is IKMRIKVHAA…RPGDPKHSSQ (71 aa). Residue Lys481 forms a Glycyl lysine isopeptide (Lys-Gly) (interchain with G-Cter in SUMO2) linkage. The residue at position 485 (Lys485) is an N6-(ADP-ribosyl)lysine. His487 is modified (ADP-ribosylhistidine). Basic and acidic residues predominate over residues 487–506; the sequence is HAAADKHNSVEDSVTKSREH. Disordered stretches follow at residues 487-650 and 688-726; these read HAAA…NGHN and SDYL…PLPK. Phosphoserine occurs at positions 495 and 499. A compositionally biased stretch (basic residues) spans 507–530; the sequence is KEKHKTHPSNHHHHHNHHSHKHSH. Residues 527-570 are required for interaction with ZMYND8; it reads KHSHSQLPVGTGNKRPGDPKHSSQTSNLAHKTYSLSSSFSSSSS. Residue His530 is modified to ADP-ribosylhistidine. ADP-ribosylserine is present on residues Ser531, Ser549, and Ser552. His556 carries the ADP-ribosylhistidine modification. Residues 560 to 570 show a composition bias toward low complexity; sequence SLSSSFSSSSS. At Ser563 the chain carries ADP-ribosylserine. Ser564 and Ser577 each carry phosphoserine. The segment covering 594-609 has biased composition (low complexity); it reads STKSSSLNFSFPSLPT. Positions 615 to 630 are enriched in polar residues; the sequence is GHSSDTSGLSFSQPSC. Position 637 is an ADP-ribosylserine (Ser637). The segment covering 710-726 has biased composition (pro residues); sequence PPPLPSEPPPPLPPLPK.

The protein belongs to the cyclin family. Cyclin C subfamily. As to quaternary structure, cyclin-T1 is the predominant cyclin that associates with CDK9 to form a heterodimer called P-TEFb. P-TEFb forms a complex with AFF4/AF5Q31. Component of a complex which is at least composed of HTATSF1/Tat-SF1, P-TEFb complex, RNA pol II, SUPT5H, and NCL/nucleolin. Component of the 7SK snRNP complex at least composed of P-TEFb (composed of CDK9 and CCNT1/cyclin-T1), HEXIM1, HEXIM2, BCDIN3, SART3 proteins and 7SK and U6 snRNAs. Interacts (via central region) with ZMYND8 (via N-terminus); the interaction is direct and the association appears to occur between homodimeric ZMYND8 and the activated form of the P-TEFb complex. Interacts with BRD4, targets chromatin binding. Interacts with JMJD6. Interacts with MDFIC. Interacts with HSF1. Interacts with HTATSF1. Interacts with TBX21. In terms of assembly, (Microbial infection) Interacts with the transactivation region of HIV-1, HIV-2 and SIV Tat. (Microbial infection) Interacts with human herpes virus 1 (HHV-1) transcriptional regulator ICP22. Post-translationally, ADP-ribosylation on serine residues by PARP1 in response to DNA damage disrupts the phase separation activity of CCNT1, thereby preventing activation of CDK9. In terms of tissue distribution, ubiquitously expressed.

The protein resides in the nucleus. Regulatory subunit of the cyclin-dependent kinase pair (CDK9/cyclin-T1) complex, also called positive transcription elongation factor B (P-TEFb), which facilitates the transition from abortive to productive elongation by phosphorylating the CTD (C-terminal domain) of the large subunit of RNA polymerase II (RNA Pol II). Required to activate the protein kinase activity of CDK9: acts by mediating formation of liquid-liquid phase separation (LLPS) that enhances binding of P-TEFb to the CTD of RNA Pol II. Functionally, (Microbial infection) In case of HIV or SIV infections, binds to the transactivation domain of the viral nuclear transcriptional activator, Tat, thereby increasing Tat's affinity for the transactivating response RNA element (TAR RNA). Serves as an essential cofactor for Tat, by promoting RNA Pol II activation, allowing transcription of viral genes. The chain is Cyclin-T1 (CCNT1) from Homo sapiens (Human).